The following is a 339-amino-acid chain: Phosphate acyltransferase (339 aa).

It belongs to the PlsX family. As to quaternary structure, homodimer. Probably interacts with PlsY.

It localises to the cytoplasm. It catalyses the reaction a fatty acyl-[ACP] + phosphate = an acyl phosphate + holo-[ACP]. It participates in lipid metabolism; phospholipid metabolism. Catalyzes the reversible formation of acyl-phosphate (acyl-PO(4)) from acyl-[acyl-carrier-protein] (acyl-ACP). This enzyme utilizes acyl-ACP as fatty acyl donor, but not acyl-CoA. The polypeptide is Phosphate acyltransferase (Methylococcus capsulatus (strain ATCC 33009 / NCIMB 11132 / Bath)).